Consider the following 600-residue polypeptide: Aspartate--tRNA(Asp/Asn) ligase (600 aa).

Glu-175 contacts L-aspartate. The tract at residues 199-202 (QLFK) is aspartate. L-aspartate is bound at residue Arg-221. ATP-binding positions include 221–223 (RDE) and Gln-230. His-453 provides a ligand contact to L-aspartate. Glu-487 is an ATP binding site. L-aspartate is bound at residue Arg-494. Position 539 to 542 (539 to 542 (GWDR)) interacts with ATP. Residues 564-600 (GGVDPLTDAPAPITPLQRKESGIDAKPKAAENKPEEK) form a disordered region. Positions 580–600 (QRKESGIDAKPKAAENKPEEK) are enriched in basic and acidic residues.

The protein belongs to the class-II aminoacyl-tRNA synthetase family. Type 1 subfamily. Homodimer.

Its subcellular location is the cytoplasm. The enzyme catalyses tRNA(Asx) + L-aspartate + ATP = L-aspartyl-tRNA(Asx) + AMP + diphosphate. Functionally, aspartyl-tRNA synthetase with relaxed tRNA specificity since it is able to aspartylate not only its cognate tRNA(Asp) but also tRNA(Asn). Reaction proceeds in two steps: L-aspartate is first activated by ATP to form Asp-AMP and then transferred to the acceptor end of tRNA(Asp/Asn). The sequence is that of Aspartate--tRNA(Asp/Asn) ligase from Corynebacterium efficiens (strain DSM 44549 / YS-314 / AJ 12310 / JCM 11189 / NBRC 100395).